The chain runs to 504 residues: L-carnitine/gamma-butyrobetaine antiporter (504 aa).

A run of 12 helical transmembrane segments spans residues 8–28 (AGIEPKVFFPPLIIVGILCWL), 51–71 (WGWAFEWYMVIMFGGWFWLVF), 92–112 (IFMMFASCTSAAVLFWGSIEI), 143–163 (GPLPWATYSFLSVAFAYFFFV), 195–215 (FYLVALILAMGTSLGLATPLV), 231–251 (LDAIIISCWILLNAICVAFGL), 263–283 (TYLSFLMLGWVFIVGGASFIV), 315–335 (AWTVFYWAWWVIYAIQMSIFL), 347–367 (LCLGMVSGLTAGTWLIWTYSG), 403–423 (LSTATMWGFFILCFIATVTLI), 446–466 (LLVRIGWSVLVGIIGIILLAL), and 475–495 (AIIAGGCPLFFVNIMVTLSFI).

It belongs to the BCCT transporter (TC 2.A.15) family. CaiT subfamily. As to quaternary structure, homotrimer.

The protein resides in the cell inner membrane. It catalyses the reaction 4-(trimethylamino)butanoate(in) + (R)-carnitine(out) = 4-(trimethylamino)butanoate(out) + (R)-carnitine(in). It functions in the pathway amine and polyamine metabolism; carnitine metabolism. Catalyzes the exchange of L-carnitine for gamma-butyrobetaine. The chain is L-carnitine/gamma-butyrobetaine antiporter from Proteus sp. (strain LE138).